Consider the following 458-residue polypeptide: MEASGTDEVDKLKTKFISAWNNMKYSWVLKTKTYFSRNSPVLLLGKCYHFKYEDESKMLPARSGCAIEDHVIAGNVEEFRKDFISRIWLTYREEFPQIEASALTTDCGWGCTLRTGQMLLAQGLILHFLGRAWTWPDALHIENADSDSWTSNTVKKFTASFEASLSGDRELRTPAVSLKETSGKCPDDHAVRNEAYHRKIISWFGDSPVAVFGLHRLIEFGKKSGKKAGDWYGPAVVAHILRKAVEEARHPDLQGLTIYVAQDCTVYNSDVIDKQTDSVTAGDARDKAVIILVPVRLGGERTNTDYLEFVKGVLSLEYCVGIIGGKPKQSYYFAGFQDDSLIYMDPHYCQSFVDVSIKDFPLETFHCPSPKKMSFRKMDPSCTIGFYCRNVQDFERASEEITKMLKISSKEKYPLFTFVNGHSKDFDFTSTAASEEDLFSEDERKNFKRFSTEEFVLL.

The residue at position 1 (Met-1) is an N-acetylmethionine. The active-site Nucleophile is the Cys-111. Active-site residues include Asp-345 and His-347. Ser-451 is subject to Phosphoserine. Thr-452 is subject to Phosphothreonine.

Belongs to the peptidase C54 family.

The protein localises to the cytoplasm. The enzyme catalyses [protein]-C-terminal L-amino acid-glycyl-phosphatidylethanolamide + H2O = [protein]-C-terminal L-amino acid-glycine + a 1,2-diacyl-sn-glycero-3-phosphoethanolamine. Its activity is regulated as follows. Inhibited by N-ethylmaleimide. In terms of biological role, cysteine protease that plays a key role in autophagy by mediating both proteolytic activation and delipidation of ATG8 family proteins. The protease activity is required for proteolytic activation of ATG8 family proteins: cleaves the C-terminal amino acid of ATG8 proteins MAP1LC3 and GABARAPL2, to reveal a C-terminal glycine. Exposure of the glycine at the C-terminus is essential for ATG8 proteins conjugation to phosphatidylethanolamine (PE) and insertion to membranes, which is necessary for autophagy. In addition to the protease activity, also mediates delipidation of ATG8 family proteins. Catalyzes delipidation of PE-conjugated forms of ATG8 proteins during macroautophagy. Compared to ATG4B, the major protein for proteolytic activation of ATG8 proteins, shows weaker ability to cleave the C-terminal amino acid of ATG8 proteins, while it displays stronger delipidation activity. In contrast to other members of the family, weakly or not involved in phagophore growth during mitophagy. The sequence is that of Cysteine protease ATG4C from Mus musculus (Mouse).